The following is a 444-amino-acid chain: 3-phosphoshikimate 1-carboxyvinyltransferase (444 aa).

The 3-phosphoshikimate site is built by lysine 29, serine 30, and arginine 34. Lysine 29 is a binding site for phosphoenolpyruvate. Residues glycine 103 and arginine 132 each contribute to the phosphoenolpyruvate site. 3-phosphoshikimate contacts are provided by serine 177, glutamine 179, aspartate 329, and lysine 356. Glutamine 179 is a phosphoenolpyruvate binding site. Residue aspartate 329 is the Proton acceptor of the active site. Residues arginine 360 and arginine 402 each coordinate phosphoenolpyruvate.

Belongs to the EPSP synthase family. Monomer.

Its subcellular location is the cytoplasm. It catalyses the reaction 3-phosphoshikimate + phosphoenolpyruvate = 5-O-(1-carboxyvinyl)-3-phosphoshikimate + phosphate. The protein operates within metabolic intermediate biosynthesis; chorismate biosynthesis; chorismate from D-erythrose 4-phosphate and phosphoenolpyruvate: step 6/7. Functionally, catalyzes the transfer of the enolpyruvyl moiety of phosphoenolpyruvate (PEP) to the 5-hydroxyl of shikimate-3-phosphate (S3P) to produce enolpyruvyl shikimate-3-phosphate and inorganic phosphate. This is 3-phosphoshikimate 1-carboxyvinyltransferase from Prochlorococcus marinus (strain NATL2A).